The sequence spans 96 residues: Co-chaperonin GroES (96 aa).

This sequence belongs to the GroES chaperonin family. Heptamer of 7 subunits arranged in a ring. Interacts with the chaperonin GroEL.

Its subcellular location is the cytoplasm. Functionally, together with the chaperonin GroEL, plays an essential role in assisting protein folding. The GroEL-GroES system forms a nano-cage that allows encapsulation of the non-native substrate proteins and provides a physical environment optimized to promote and accelerate protein folding. GroES binds to the apical surface of the GroEL ring, thereby capping the opening of the GroEL channel. This chain is Co-chaperonin GroES, found in Thiobacillus denitrificans (strain ATCC 25259 / T1).